The sequence spans 328 residues: uncharacterized protein (328 aa).

The region spanning 37-179 (LTERLLCHQG…AMTVLRCRKI (143 aa)) is the SIS domain. 52–57 (GIGKSG) is an ATP binding site. CBS domains lie at 205–264 (LSPR…GGAI) and 273–328 (MTRK…AGLL).

This sequence belongs to the SIS family. GutQ/KpsF subfamily.

This is an uncharacterized protein from Chlamydia muridarum (strain MoPn / Nigg).